The following is a 435-amino-acid chain: Phosphomethylpyrimidine synthase (435 aa).

Residues Asn67, Met96, Tyr125, His163, 185–187 (SRG), 226–229 (DGLR), and Glu265 contribute to the substrate site. His269 contributes to the Zn(2+) binding site. Tyr292 provides a ligand contact to substrate. His333 is a Zn(2+) binding site. [4Fe-4S] cluster contacts are provided by Cys408, Cys411, and Cys415.

This sequence belongs to the ThiC family. The cofactor is [4Fe-4S] cluster.

The enzyme catalyses 5-amino-1-(5-phospho-beta-D-ribosyl)imidazole + S-adenosyl-L-methionine = 4-amino-2-methyl-5-(phosphooxymethyl)pyrimidine + CO + 5'-deoxyadenosine + formate + L-methionine + 3 H(+). It functions in the pathway cofactor biosynthesis; thiamine diphosphate biosynthesis. Its function is as follows. Catalyzes the synthesis of the hydroxymethylpyrimidine phosphate (HMP-P) moiety of thiamine from aminoimidazole ribotide (AIR) in a radical S-adenosyl-L-methionine (SAM)-dependent reaction. The chain is Phosphomethylpyrimidine synthase from Thermus thermophilus (strain ATCC BAA-163 / DSM 7039 / HB27).